The following is a 152-amino-acid chain: MGLEKSFILFSLLVLVLGCVQPSLVGESKESPSEKFKRRHMDEEGPYQSSPTYCNQMMKDRGMTSGRCKPLNTFVHESWAKVKAICSQDKVTCKNGKSNCHKSISTLNITDCLLMGSSKYPKCDYSTTARQKHSIIACDGNPYVPVHYDATV.

The signal sequence occupies residues 1 to 25 (MGLEKSFILFSLLVLVLGCVQPSLV). The tract at residues 26-48 (GESKESPSEKFKRRHMDEEGPYQ) is disordered. Over residues 27–43 (ESKESPSEKFKRRHMDE) the composition is skewed to basic and acidic residues. Substrate-binding residues include K35 and R38. H40 functions as the Proton acceptor in the catalytic mechanism. 4 disulfides stabilise this stretch: C54-C112, C68-C123, C86-C138, and C93-C100. Residues 69-73 (KPLNT) and K94 contribute to the substrate site. The active-site Proton donor is H147.

This sequence belongs to the pancreatic ribonuclease family. In terms of assembly, monomer.

The protein resides in the secreted. It catalyses the reaction an [RNA] containing cytidine + H2O = an [RNA]-3'-cytidine-3'-phosphate + a 5'-hydroxy-ribonucleotide-3'-[RNA].. The enzyme catalyses an [RNA] containing uridine + H2O = an [RNA]-3'-uridine-3'-phosphate + a 5'-hydroxy-ribonucleotide-3'-[RNA].. Its function is as follows. Endonuclease that catalyzes the cleavage of RNA on the 3' side of pyrimidine nucleotides. Acts on single-stranded and double-stranded RNA. This chain is Ribonuclease pancreatic gamma-type, found in Rattus fuscipes (Bush rat).